Reading from the N-terminus, the 254-residue chain is uncharacterized protein (254 aa).

The protein belongs to the nucleoside-specific channel-forming outer membrane porin (Tsx) (TC 1.B.10) family.

This is an uncharacterized protein from Escherichia coli (strain K12).